Reading from the N-terminus, the 558-residue chain is MRSDAIKKGHLKAPNRSLLRACGLKDEDFDKPFIGVANSYIDIIPGHYFLNDYAKIIKDEIRKNGCVPFEFNTIGIDDGIAMGHEGMLYSLPSREIIANSIETVMNAHQLDALICIPNCDKITPGMLMGALRVNVPTIFVSGGPMASGVTKKGEKISLSSVFEAVGAYEAKKISEEEFKDIECSACPSGGSCSGMFTANSMNTLCEAMGIALEGNGTILALSKEREELLRKAARRICEIALDERFKIRNIITQKAVRNAMIVDMAMGGSSNTVLHMLAISREAGVALDIKDLNFISSKVAHIAKIAPSLNSVYMDDIHKAGGVSAVMAEISSRQGHILELDALTITGESLEERLKNAKIKDENIIRKVDNAYSKVGGLAILFGNLAEQGCVIKTAGIIGERKFKGKAVCFNSQDEAIKGIIKGKVQKGNVCVIRYEGPKGGPGMQEMLSPTSLLMGMGLGADVALITDGRFSGATRGLSIGHISPEAAEGGLIGLLKDGDEIEIDVDAYTIHANLSEKEITQRKKEFVLPQKEVPSRWLRMYQKLVSNASKGAVLDME.

D78 is a Mg(2+) binding site. C119 serves as a coordination point for [2Fe-2S] cluster. 2 residues coordinate Mg(2+): D120 and K121. N6-carboxylysine is present on K121. C192 is a binding site for [2Fe-2S] cluster. E446 contributes to the Mg(2+) binding site. Residue S472 is the Proton acceptor of the active site.

It belongs to the IlvD/Edd family. Homodimer. It depends on [2Fe-2S] cluster as a cofactor. Mg(2+) serves as cofactor.

It carries out the reaction (2R)-2,3-dihydroxy-3-methylbutanoate = 3-methyl-2-oxobutanoate + H2O. The enzyme catalyses (2R,3R)-2,3-dihydroxy-3-methylpentanoate = (S)-3-methyl-2-oxopentanoate + H2O. It functions in the pathway amino-acid biosynthesis; L-isoleucine biosynthesis; L-isoleucine from 2-oxobutanoate: step 3/4. The protein operates within amino-acid biosynthesis; L-valine biosynthesis; L-valine from pyruvate: step 3/4. Its function is as follows. Functions in the biosynthesis of branched-chain amino acids. Catalyzes the dehydration of (2R,3R)-2,3-dihydroxy-3-methylpentanoate (2,3-dihydroxy-3-methylvalerate) into 2-oxo-3-methylpentanoate (2-oxo-3-methylvalerate) and of (2R)-2,3-dihydroxy-3-methylbutanoate (2,3-dihydroxyisovalerate) into 2-oxo-3-methylbutanoate (2-oxoisovalerate), the penultimate precursor to L-isoleucine and L-valine, respectively. This Campylobacter jejuni subsp. doylei (strain ATCC BAA-1458 / RM4099 / 269.97) protein is Dihydroxy-acid dehydratase.